Reading from the N-terminus, the 533-residue chain is Quinate permease (533 aa).

Residues 1-21 are Cytoplasmic-facing; the sequence is MSILALVEDRPTPREVYNWRV. The chain crosses the membrane as a helical span at residues 22–42; sequence YLLAAVASFTSCMIGYDSAFI. Over 43 to 67 the chain is Extracellular; that stretch reads GTTLSLQSFQNEFNWESLNTDLISA. A helical transmembrane segment spans residues 68–88; the sequence is NIVSLYQAGAFFGALFAYPIG. Residues 89–94 lie on the Cytoplasmic side of the membrane; it reads HFWGRR. A helical membrane pass occupies residues 95-115; it reads WGLMFSALIFFLGAGMMLGAN. At 116-127 the chain is on the extracellular side; sequence GDRGLGLIYGGR. Residues 128–148 form a helical membrane-spanning segment; sequence VLAGIGVGAGSNICPIYISEM. The Cytoplasmic segment spans residues 149-156; that stretch reads APPAIRGR. A helical membrane pass occupies residues 157-177; it reads LVGVYELGWQIGGVVGFWINY. Over 178–191 the chain is Extracellular; sequence GVDETLAPSHKQWI. A helical membrane pass occupies residues 192–212; sequence IPFAVQLIPAGLLIIGALLIR. At 213–282 the chain is on the cytoplasmic side; the sequence is ESPRWLFLRG…AWTNKRILYR (70 aa). A helical transmembrane segment spans residues 283–303; sequence LFLGSMLFLWQNGSGINAINY. Topologically, residues 304 to 324 are extracellular; the sequence is YSPRVFKSIGVSGGNTSLLTT. Residues 325–346 traverse the membrane as a helical segment; that stretch reads GIFGVVKAVITFVWLLYLIDHF. The Cytoplasmic portion of the chain corresponds to 347–349; that stretch reads GRR. The chain crosses the membrane as a helical span at residues 350 to 370; it reads NLLLVGAAGGSVCLWIVGGYI. The Extracellular segment spans residues 371 to 385; the sequence is KIAKPENNPEGTQLD. Residues 386 to 406 traverse the membrane as a helical segment; it reads SGGIAAIFFFYLWTAFYTPSW. Topologically, residues 407–431 are cytoplasmic; that stretch reads NGTPWVINSEMFDPTVRSLAQACAA. The chain crosses the membrane as a helical span at residues 432–452; that stretch reads ASNWLWNFLISRFTPQMFTSM. Topologically, residues 453–454 are extracellular; the sequence is GY. Residues 455-475 traverse the membrane as a helical segment; that stretch reads GVYFFFASLMILSIVFVFFLI. The Cytoplasmic segment spans residues 476–533; that stretch reads PETKGVPLESMETLFDKKPVWHAHSQLIRELRENEEAFRADMGASGKGGVTKEYVEEA.

Belongs to the major facilitator superfamily. Sugar transporter (TC 2.A.1.1) family. As to quaternary structure, interacts with creB. Post-translationally, ubiquitinated. Deubiquitinated by creB, probably to control its activity or amount.

It is found in the cell membrane. Integral membrane transporter that imports quinic acid to be catabolized as a carbon source. This is Quinate permease (qutD) from Emericella nidulans (strain FGSC A4 / ATCC 38163 / CBS 112.46 / NRRL 194 / M139) (Aspergillus nidulans).